The chain runs to 319 residues: Vomeronasal type-1 receptor 51 (319 aa).

Topologically, residues 1–31 are extracellular; that stretch reads MNEILFFSPQPLFSHMMNENSRVHTHSNLRH. A helical membrane pass occupies residues 32 to 52; sequence IFFSEIGIGISGNSFLLLFHI. At 53 to 65 the chain is on the cytoplasmic side; it reads LKFIHGHRSRLSD. A helical membrane pass occupies residues 66 to 86; that stretch reads LPIGLLSLIHLLMLLVMAFIA. Topologically, residues 87 to 109 are extracellular; that stretch reads TDIFISWRGWDDIICKFLVYLYR. A disulfide bond links C101 and C188. A helical membrane pass occupies residues 110-130; sequence VLRGLSLCTTSMLSVLQAIIL. Over 131-150 the chain is Cytoplasmic; sequence SPRSSCLAKFKRKSLHHISC. A helical transmembrane segment spans residues 151–171; sequence AILFLSVLYMLIGSQLLVSII. At 172–203 the chain is on the extracellular side; the sequence is ATPNLTTNDFIYVTQSCSILPLSYVMQSMFST. N-linked (GlcNAc...) asparagine glycosylation occurs at N175. The chain crosses the membrane as a helical span at residues 204-224; the sequence is LLVIRDVFLISLMVLSTWYMV. Topologically, residues 225–254 are cytoplasmic; that stretch reads ALLCRHRKKTQHLQGISLSPKTSPKQRATQ. Residues 255–275 traverse the membrane as a helical segment; the sequence is TLLMLMSFFVLMTIYDTIVSC. Residues 276–285 are Extracellular-facing; the sequence is SRTMFLNDPT. A helical transmembrane segment spans residues 286–306; the sequence is SYNMQIFVVHIYATVSPFVFM. At 307–319 the chain is on the cytoplasmic side; sequence STEKHIVNCLRSV.

The protein belongs to the G-protein coupled receptor 1 family. Expressed in a subset of sensory neurons located in the apical layer of the vomeronasal organ.

Its subcellular location is the cell membrane. Its function is as follows. Putative pheromone receptor implicated in the regulation of social as well as reproductive behavior. In Mus musculus (Mouse), this protein is Vomeronasal type-1 receptor 51 (Vmn1r51).